The sequence spans 239 residues: DUP240 protein DFP3 (239 aa).

The Cytoplasmic segment spans residues methionine 1 to proline 54. A helical transmembrane segment spans residues methionine 55–valine 75. Residues lysine 76 to aspartate 79 lie on the Extracellular side of the membrane. Residues valine 80–isoleucine 104 traverse the membrane as a helical segment. The Cytoplasmic segment spans residues serine 105–proline 239.

It belongs to the DUP/COS family. In terms of assembly, interacts according to large scale protein interaction studies with MEC3 and ULP1.

The protein resides in the membrane. In Saccharomyces cerevisiae (strain ATCC 204508 / S288c) (Baker's yeast), this protein is DUP240 protein DFP3.